The sequence spans 142 residues: Nucleoside diphosphate kinase (142 aa).

ATP is bound by residues Lys11, Phe59, Arg87, Thr93, Arg104, and Asn114. Catalysis depends on His117, which acts as the Pros-phosphohistidine intermediate.

This sequence belongs to the NDK family. As to quaternary structure, homotetramer. Requires Mg(2+) as cofactor.

It localises to the cytoplasm. The enzyme catalyses a 2'-deoxyribonucleoside 5'-diphosphate + ATP = a 2'-deoxyribonucleoside 5'-triphosphate + ADP. The catalysed reaction is a ribonucleoside 5'-diphosphate + ATP = a ribonucleoside 5'-triphosphate + ADP. Functionally, major role in the synthesis of nucleoside triphosphates other than ATP. The ATP gamma phosphate is transferred to the NDP beta phosphate via a ping-pong mechanism, using a phosphorylated active-site intermediate. This Yersinia pseudotuberculosis serotype O:1b (strain IP 31758) protein is Nucleoside diphosphate kinase.